A 134-amino-acid polypeptide reads, in one-letter code: Profilin-2 (134 aa).

Residues Cys-13 and Cys-118 are joined by a disulfide bond. Positions Ala-84 to Thr-100 match the Involved in PIP2 interaction motif. Thr-114 is subject to Phosphothreonine.

The protein belongs to the profilin family. Occurs in many kinds of cells as a complex with monomeric actin in a 1:1 ratio. In terms of processing, phosphorylated by MAP kinases.

It localises to the cytoplasm. It is found in the cytoskeleton. Binds to actin and affects the structure of the cytoskeleton. At high concentrations, profilin prevents the polymerization of actin, whereas it enhances it at low concentrations. In Olea europaea (Common olive), this protein is Profilin-2.